A 380-amino-acid polypeptide reads, in one-letter code: Cytochrome b (380 aa).

Transmembrane regions (helical) follow at residues 33-53 (FGSLLGLCLISQILTGLFLAM), 77-98 (WLIRNLHANGASFFFICIYLHI), 113-133 (WNIGVVLLLLVMATAFVGYVL), and 178-198 (FFAFHFLLPFIVAAMTMLHLL). Heme b is bound by residues His83 and His97. Positions 182 and 196 each coordinate heme b. His201 is an a ubiquinone binding site. Helical transmembrane passes span 226–246 (YKDLLGFAAVIILLTCLALFT), 288–308 (LGGVLALLASILVLMVVPILH), 320–340 (VTQFLFWALIANVAILTWIGG), and 347–367 (YIIIGQIASLTYFALFLLIMP).

The protein belongs to the cytochrome b family. As to quaternary structure, the cytochrome bc1 complex contains 3 respiratory subunits (MT-CYB, CYC1 and UQCRFS1), 2 core proteins (UQCRC1 and UQCRC2) and probably 6 low-molecular weight proteins. It depends on heme b as a cofactor.

The protein localises to the mitochondrion inner membrane. Its function is as follows. Component of the ubiquinol-cytochrome c reductase complex (complex III or cytochrome b-c1 complex) that is part of the mitochondrial respiratory chain. The b-c1 complex mediates electron transfer from ubiquinol to cytochrome c. Contributes to the generation of a proton gradient across the mitochondrial membrane that is then used for ATP synthesis. This chain is Cytochrome b (mt-cyb), found in Pagrus major (Red sea bream).